We begin with the raw amino-acid sequence, 337 residues long: Probable cytosolic iron-sulfur protein assembly protein Ciao1 (337 aa).

7 WD repeats span residues Gly-12–Ala-51, Gly-58–Asn-97, Gly-102–Cys-141, Thr-147–Ser-186, Ser-193–Gly-232, Tyr-251–Glu-290, and Ala-301–Glu-337.

Belongs to the WD repeat CIA1 family.

Essential component of the cytosolic iron-sulfur (Fe/S) protein assembly machinery. Required for the maturation of extramitochondrial Fe/S proteins. The sequence is that of Probable cytosolic iron-sulfur protein assembly protein Ciao1 from Aedes aegypti (Yellowfever mosquito).